The sequence spans 206 residues: Large ribosomal subunit protein bL9 (206 aa).

Residues 182-206 form a disordered region; sequence FAENQQKALAKEMNDNDANSINEEA. Residues 197–206 show a composition bias toward polar residues; sequence NDANSINEEA.

This sequence belongs to the bacterial ribosomal protein bL9 family.

In terms of biological role, binds to the 23S rRNA. The chain is Large ribosomal subunit protein bL9 from Bartonella henselae (strain ATCC 49882 / DSM 28221 / CCUG 30454 / Houston 1) (Rochalimaea henselae).